The chain runs to 601 residues: Glutathione-regulated potassium-efflux system protein KefB (601 aa).

Helical transmembrane passes span 4 to 24, 29 to 49, 55 to 75, 87 to 107, 115 to 135, 152 to 172, 177 to 197, 207 to 227, 230 to 250, 268 to 288, 291 to 311, 324 to 344, and 356 to 376; these read SDFL…VPLA, IGAV…GLGF, EILH…GLEL, IFGV…GLLM, AAVV…LQLM, VLLF…LLAG, HFDW…LIGG, FIAA…LVLG, LFMD…GVLL, GLLL…GVLY, LLWV…VLYL, MQFA…FSTA, and ALLL…MKLV. One can recognise an RCK N-terminal domain in the interval 400 to 519; the sequence is KPQVIVVGFG…AGVTQFSRET (120 aa).

The protein belongs to the monovalent cation:proton antiporter 2 (CPA2) transporter (TC 2.A.37) family. KefB subfamily. Interacts with the regulatory subunit KefG.

It is found in the cell inner membrane. With respect to regulation, activated by adducts between glutathione and electrophiles. Its function is as follows. Pore-forming subunit of a potassium efflux system that confers protection against electrophiles. Catalyzes K(+)/H(+) antiport. The chain is Glutathione-regulated potassium-efflux system protein KefB from Escherichia coli (strain K12).